Consider the following 205-residue polypeptide: ATP phosphoribosyltransferase (205 aa).

It belongs to the ATP phosphoribosyltransferase family. Short subfamily. As to quaternary structure, heteromultimer composed of HisG and HisZ subunits.

Its subcellular location is the cytoplasm. The catalysed reaction is 1-(5-phospho-beta-D-ribosyl)-ATP + diphosphate = 5-phospho-alpha-D-ribose 1-diphosphate + ATP. It functions in the pathway amino-acid biosynthesis; L-histidine biosynthesis; L-histidine from 5-phospho-alpha-D-ribose 1-diphosphate: step 1/9. Its function is as follows. Catalyzes the condensation of ATP and 5-phosphoribose 1-diphosphate to form N'-(5'-phosphoribosyl)-ATP (PR-ATP). Has a crucial role in the pathway because the rate of histidine biosynthesis seems to be controlled primarily by regulation of HisG enzymatic activity. The sequence is that of ATP phosphoribosyltransferase from Staphylococcus carnosus (strain TM300).